The chain runs to 753 residues: Elongin-A2 (753 aa).

The region spanning 5-80 (STTLHAVEKL…ARWKKLVLVD (76 aa)) is the TFIIS N-terminal domain. Disordered regions lie at residues 80–245 (DRNT…DWHS), 261–453 (ETPR…GPKT), and 477–497 (LSDS…SPKF). 2 stretches are compositionally biased toward basic and acidic residues: residues 147–157 (HSREPRAERKC) and 271–285 (ARDR…DKEG). Residues 306 to 317 (KRPQHSHSNKKR) are compositionally biased toward basic residues. A compositionally biased stretch (basic and acidic residues) spans 333-348 (SPEEKEQLSNDRETQE). Residues 366 to 377 (EVEEVDMAEEFE) show a composition bias toward acidic residues. The span at 409–428 (DKQRKANESKGTRESWDSAK) shows a compositional bias: basic and acidic residues. Residues 500–659 (EAAFPGRRVN…TPYDTSRRQE (160 aa)) are activation domain. The interval 528–537 (TLRQQCAQVL) is BC-box. The segment at 528–537 (TLRQQCAQVL) is interacting with Elongin BC complex. A disordered region spans residues 650–735 (TPYDTSRRQE…KTRKQAAKKV (86 aa)). Basic and acidic residues predominate over residues 654–663 (TSRRQEKSAG). A compositionally biased stretch (low complexity) spans 680 to 700 (GSSHTPSSQSSSGGGRDSSSS).

As to quaternary structure, heterotrimer of an A (ELOA, ELOA2 or ELOA3P), ELOB and ELOC subunit. As to expression, specifically expressed in testis.

The protein localises to the nucleus. Functionally, SIII, also known as elongin, is a general transcription elongation factor that increases the RNA polymerase II transcription elongation past template-encoded arresting sites. Subunit A2 is transcriptionally active but its transcription activity is not enhanced by binding to the dimeric complex of the SIII regulatory subunits B and C (elongin BC complex). The protein is Elongin-A2 of Homo sapiens (Human).